Consider the following 172-residue polypeptide: Nascent polypeptide-associated complex subunit beta (172 aa).

2 disordered regions span residues 36–58 (KTGK…GDDK) and 142–172 (QNMQ…DKVE). The span at 41-50 (TPRRKMKRAP) shows a compositional bias: basic residues. The 66-residue stretch at 54–119 (GGDDKKLQQT…GEDKELTELV (66 aa)) folds into the NAC-A/B domain.

The protein belongs to the NAC-beta family. In terms of assembly, part of the nascent polypeptide-associated complex (NAC), consisting of EGD2 and EGD1. NAC associates with ribosomes via EGD1.

It localises to the cytoplasm. It is found in the nucleus. Component of the nascent polypeptide-associated complex (NAC), a dynamic component of the ribosomal exit tunnel, protecting the emerging polypeptides from interaction with other cytoplasmic proteins to ensure appropriate nascent protein targeting. The NAC complex also promotes mitochondrial protein import by enhancing productive ribosome interactions with the outer mitochondrial membrane and blocks the inappropriate interaction of ribosomes translating non-secretory nascent polypeptides with translocation sites in the membrane of the endoplasmic reticulum. EGD1 may act as a transcription factor that exert a negative effect on the expression of several genes that are transcribed by RNA polymerase II. The chain is Nascent polypeptide-associated complex subunit beta (EGD1) from Pyricularia oryzae (strain 70-15 / ATCC MYA-4617 / FGSC 8958) (Rice blast fungus).